We begin with the raw amino-acid sequence, 74 residues long: MISTSLLLVVLLFAILAIVDAQWGYGGPYGGYGGGYGGGPWGYGGGWRRRHWGGYGGGPWGGYGGGPWGGYYGK.

The signal sequence occupies residues 1 to 21; the sequence is MISTSLLLVVLLFAILAIVDA. Y72 carries the tyrosine amide modification.

It belongs to the YARP (YGGW-amide related peptide) family. Expressed in hypoderm.

It localises to the secreted. Its function is as follows. May have antifungic activity against D.coniospora. The protein is Neuropeptide-like protein 33 (nlp-33) of Caenorhabditis elegans.